A 151-amino-acid chain; its full sequence is Large ribosomal subunit protein eL8 (151 aa).

Belongs to the eukaryotic ribosomal protein eL8 family. As to quaternary structure, part of the 50S ribosomal subunit. Probably part of the RNase P complex.

It localises to the cytoplasm. Multifunctional RNA-binding protein that recognizes the K-turn motif in ribosomal RNA, the RNA component of RNase P, box H/ACA, box C/D and box C'/D' sRNAs. This chain is Large ribosomal subunit protein eL8, found in Pyrobaculum aerophilum (strain ATCC 51768 / DSM 7523 / JCM 9630 / CIP 104966 / NBRC 100827 / IM2).